A 1736-amino-acid polypeptide reads, in one-letter code: Collagen alpha-2(XI) chain (1736 aa).

The first 27 residues, 1–27, serve as a signal peptide directing secretion; it reads MERCSRCHRLLLFLPLVLGLSAAPGWA. The Laminin G-like domain occupies 57 to 228; the sequence is DVAYRVARPA…QSCGQKDLEC (172 aa). The nonhelical region stretch occupies residues 215–486; it reads QAAYQSCGQK…ILQQARLALR (272 aa). 3 disordered regions span residues 228–270, 364–465, and 485–1538; these read CERE…PTES, LSAE…DKGP, and LRGP…GSPA. Over residues 258–269 the composition is skewed to polar residues; that stretch reads PQSQEPQKQPTE. Collagen-like domains follow at residues 399–447, 487–545, and 546–583; these read GPPG…GPPG, GPPG…ADGA, and RGMP…GLPG. Residues 487–1500 form a triple-helical region region; sequence GPPGPMGYTG…PGHPGPPGEV (1014 aa). Residues 497-533 are compositionally biased toward low complexity; that stretch reads RPGPLGQPGSPGLKGESGDLGPQGPRGPQGLTGPPGK. A compositionally biased stretch (pro residues) spans 615–624; it reads KGPPGIPGPP. Residues 650–668 show a composition bias toward low complexity; that stretch reads QQGTPGAQGLPGPQGAIGP. The 56-residue stretch at 682 to 737 folds into the Collagen-like 4 domain; that stretch reads GMPGSDGLPGHPGKEGPPGTKGNQGPSGPQGPLGYPGPRGVKGVDGIRGLKGHKGE. Residues 765 to 774 are compositionally biased toward basic and acidic residues; the sequence is RGEDGPEGPK. Composition is skewed to low complexity over residues 776–789 and 842–861; these read RTGP…TGLM and PTGP…SGAK. Collagen-like domains are found at residues 868-924, 967-1025, 1026-1055, 1056-1086, and 1114-1172; these read GPHG…PGPP, GDPG…AAGS, GGPI…EKGP, IGPT…DGDK, and GPVG…ETGD. Residues 994-1003 are compositionally biased toward gly residues; that stretch reads GTAGGPGLKG. A compositionally biased stretch (pro residues) spans 1029–1040; it reads IGPPGRPGPQGP. 2 stretches are compositionally biased toward low complexity: residues 1115-1133 and 1155-1164; these read PVGQ…ARGP and IGLQGLPGPS. Residues 1176-1187 show a composition bias toward pro residues; it reads MGPPGPPGPRGP. Positions 1188–1197 are enriched in low complexity; sequence AGPNGADGPQ. A compositionally biased stretch (gly residues) spans 1198-1207; the sequence is GSPGGVGNLG. The segment covering 1217 to 1230 has biased composition (low complexity); that stretch reads ESGSPGVQGEPGVK. Basic and acidic residues predominate over residues 1232–1241; that stretch reads PRGERGEKGE. The span at 1256–1272 shows a compositional bias: low complexity; it reads PTGDNGPKGNPGPVGFP. Residues 1287-1296 are compositionally biased toward basic and acidic residues; it reads DGAKGDRGED. Residues 1376-1386 are compositionally biased toward low complexity; sequence QQGRPGATGQA. Composition is skewed to pro residues over residues 1388–1397 and 1457–1467; these read PPGPVGPPGL and PGGPPGLPGPS. Collagen-like domains lie at 1393–1447 and 1448–1499; these read GPPG…GETG and IPGA…PPGE. The span at 1469 to 1481 shows a compositional bias: low complexity; it reads PKGAKGATGPAGP. The propeptide at 1501 to 1736 is C-terminal propeptide; sequence IQPLPIQMPK…VLLGPVCFMG (236 aa). In terms of domain architecture, Fibrillar collagen NC1 spans 1541–1735; that stretch reads EEIFGSLDSL…GVLLGPVCFM (195 aa). The cysteines at positions 1571 and 1603 are disulfide-linked. Residues D1589, N1591, Q1592, C1594, and D1597 each coordinate Ca(2+). N1604 carries N-linked (GlcNAc...) asparagine glycosylation. Cystine bridges form between C1612/C1733 and C1655/C1689.

This sequence belongs to the fibrillar collagen family. In terms of assembly, trimers composed of three different chains: alpha 1(XI), alpha 2(XI), and alpha 3(XI). Alpha 3(XI) is a post-translational modification of alpha 1(II). Alpha 1(V) can also be found instead of alpha 3(XI)=1(II). In terms of processing, prolines at the third position of the tripeptide repeating unit (G-X-Y) are hydroxylated in some or all of the chains.

Its subcellular location is the secreted. The protein resides in the extracellular space. It is found in the extracellular matrix. May play an important role in fibrillogenesis by controlling lateral growth of collagen II fibrils. This chain is Collagen alpha-2(XI) chain (Col11a2), found in Mus musculus (Mouse).